The following is a 236-amino-acid chain: 2-C-methyl-D-erythritol 4-phosphate cytidylyltransferase (236 aa).

Belongs to the IspD/TarI cytidylyltransferase family. IspD subfamily. As to quaternary structure, homodimer.

The catalysed reaction is 2-C-methyl-D-erythritol 4-phosphate + CTP + H(+) = 4-CDP-2-C-methyl-D-erythritol + diphosphate. The protein operates within isoprenoid biosynthesis; isopentenyl diphosphate biosynthesis via DXP pathway; isopentenyl diphosphate from 1-deoxy-D-xylulose 5-phosphate: step 2/6. Catalyzes the formation of 4-diphosphocytidyl-2-C-methyl-D-erythritol from CTP and 2-C-methyl-D-erythritol 4-phosphate (MEP). The chain is 2-C-methyl-D-erythritol 4-phosphate cytidylyltransferase from Salmonella heidelberg (strain SL476).